Reading from the N-terminus, the 98-residue chain is DNA-binding protein Fis (98 aa).

Residues 74-93 (QTRAATMLGINRGTLRKKLK) constitute a DNA-binding region (H-T-H motif).

Belongs to the transcriptional regulatory Fis family. Homodimer.

Its function is as follows. Activates ribosomal RNA transcription. Plays a direct role in upstream activation of rRNA promoters. This chain is DNA-binding protein Fis, found in Mannheimia haemolytica (Pasteurella haemolytica).